The primary structure comprises 182 residues: Transcription termination/antitermination protein NusG (182 aa).

One can recognise a KOW domain in the interval 131–163 (VGEQVRIKSGPFANQVGEVQEIEADKFKLTVLV).

It belongs to the NusG family.

Its function is as follows. Participates in transcription elongation, termination and antitermination. The chain is Transcription termination/antitermination protein NusG from Staphylococcus carnosus (strain TM300).